Reading from the N-terminus, the 78-residue chain is Consomatin Nc1 (78 aa).

Positions 1–22 are cleaved as a signal peptide; it reads MQTAYWVMVMVMVWITAPLSEG. A propeptide spanning residues 23-59 is cleaved from the precursor; the sequence is GKPNDVIRGLVPDDLTPQLILRSLISRRRSDKDVGKR. E61 is subject to 4-carboxyglutamate. Residues C62 and C67 are joined by a disulfide bond. A D-tryptophan modification is found at W64. P70 is subject to 4-hydroxyproline. Positions 71-78 are excised as a propeptide; that stretch reads LSRRHDLG.

The protein belongs to the conotoxin C superfamily. Consomatin family. Expressed by the venom duct.

It is found in the secreted. Its function is as follows. Moderately activates human somatostatin receptors (SSTR) with a preferential activation of SSTR1 and SSTR4. In vivo, does not cause behavioral changes in mice within a few minutes of intracranial injection, but causes a progressive loss of movement thereafter. Four to five hours after injection, mice recover, even with the highest dose tested. Shows antinociception and antihyperalgesia activities in two mouse models of acute pain, most probably by acting outside the central nervous system. The chain is Consomatin Nc1 from Conus neocostatus (Cone snail).